Consider the following 437-residue polypeptide: Endoplasmic reticulum protein SC65 (437 aa).

The first 18 residues, 1 to 18, serve as a signal peptide directing secretion; that stretch reads MARVAWGLLWLLLGSAGA. The N-linked (GlcNAc...) asparagine glycan is linked to asparagine 361. 2 stretches are compositionally biased toward acidic residues: residues 381–413 and 428–437; these read DEME…EEGM and AEAEPEPELA. A disordered region spans residues 381–437; it reads DEMELEETEPPLEPEDALSDAEFEGEGDYEEGMYADWWQEPDAKGDEAEAEPEPELA.

It belongs to the leprecan family. Interacts with PLOD1, P3H3 and PPIB. Identified in a complex with PLOD1 and P3H3. Detected in fibroblasts (at protein level). Detected in spleen, prostate, testis, ovary, colon, pancreas, kidney, placenta and heart.

The protein resides in the endoplasmic reticulum. Its function is as follows. Part of a complex composed of PLOD1, P3H3 and P3H4 that catalyzes hydroxylation of lysine residues in collagen alpha chains and is required for normal assembly and cross-linking of collagen fibrils. Required for normal bone density and normal skin stability via its role in hydroxylation of lysine residues in collagen alpha chains and in collagen fibril assembly. The sequence is that of Endoplasmic reticulum protein SC65 from Homo sapiens (Human).